We begin with the raw amino-acid sequence, 386 residues long: Protein phosphatase methylesterase 1 (386 aa).

The tract at residues 1–38 (MSALEKSMHLGRLPSRPPLPGSGGSQSGAKMRMGPGRK) is disordered. At Ser15 the chain carries Phosphoserine. Arg16 carries the post-translational modification Asymmetric dimethylarginine; alternate. An Omega-N-methylarginine; alternate modification is found at Arg16. Position 42 is a phosphoserine (Ser42). Residue Ser156 is part of the active site. The span at 254 to 265 (IIEEEEEDEEGS) shows a compositional bias: acidic residues. Residues 254–280 (IIEEEEEDEEGSESISKRKKEDDMETK) are disordered. Over residues 268–280 (ISKRKKEDDMETK) the composition is skewed to basic and acidic residues. The active site involves His349.

This sequence belongs to the AB hydrolase superfamily. In terms of assembly, binds PPP2CA and PPP2CB. In terms of processing, phosphorylated by SIK1 following increases in intracellular sodium, leading to dissociation from the protein phosphatase 2A (PP2A) complex and subsequent dephosphorylation of sodium/potassium-transporting ATPase ATP1A1.

The enzyme catalyses [phosphatase 2A protein]-C-terminal L-leucine methyl ester + H2O = [phosphatase 2A protein]-C-terminal L-leucine + methanol + H(+). In terms of biological role, demethylates proteins that have been reversibly carboxymethylated. Demethylates PPP2CB (in vitro) and PPP2CA. Binding to PPP2CA displaces the manganese ion and inactivates the enzyme. This Pongo abelii (Sumatran orangutan) protein is Protein phosphatase methylesterase 1 (PPME1).